Consider the following 558-residue polypeptide: T-complex protein 1 subunit gamma (558 aa).

Cys-381 and Cys-387 form a disulfide bridge.

The protein belongs to the TCP-1 chaperonin family. Heterooligomeric complex of about 850 to 900 kDa that forms two stacked rings, 12 to 16 nm in diameter.

Its subcellular location is the cytoplasm. Its function is as follows. Molecular chaperone; assists the folding of proteins upon ATP hydrolysis. Known to play a role, in vitro, in the folding of actin and tubulin. This Thalassiosira weissflogii (Marine diatom) protein is T-complex protein 1 subunit gamma.